A 206-amino-acid chain; its full sequence is Small ribosomal subunit protein uS4 (206 aa).

Residues R98–E176 form the S4 RNA-binding domain.

It belongs to the universal ribosomal protein uS4 family. In terms of assembly, part of the 30S ribosomal subunit. Contacts protein S5. The interaction surface between S4 and S5 is involved in control of translational fidelity.

Functionally, one of the primary rRNA binding proteins, it binds directly to 16S rRNA where it nucleates assembly of the body of the 30S subunit. With S5 and S12 plays an important role in translational accuracy. The chain is Small ribosomal subunit protein uS4 from Gloeobacter violaceus (strain ATCC 29082 / PCC 7421).